We begin with the raw amino-acid sequence, 202 residues long: Small ribosomal subunit protein uS4c (202 aa).

One can recognise an S4 RNA-binding domain in the interval 90–153 (MRLDNVIFRL…KSEAIISKNI (64 aa)).

This sequence belongs to the universal ribosomal protein uS4 family. As to quaternary structure, part of the 30S ribosomal subunit. Contacts protein S5. The interaction surface between S4 and S5 is involved in control of translational fidelity.

It localises to the plastid. The protein resides in the chloroplast. Functionally, one of the primary rRNA binding proteins, it binds directly to 16S rRNA where it nucleates assembly of the body of the 30S subunit. Its function is as follows. With S5 and S12 plays an important role in translational accuracy. In Hypopterygium didictyon, this protein is Small ribosomal subunit protein uS4c (rps4).